The sequence spans 311 residues: Homeobox protein CDX-2 (311 aa).

Ser-60 carries the post-translational modification Phosphoserine. Residues 111-151 (EYHAHHHPHHHPHHPAASPSCASGLLQTLNLGPPGPAATAA) form a disordered region. Residues 114-124 (AHHHPHHHPHH) are compositionally biased toward basic residues. The interval 185–215 (KDKYRVVYTDHQRLELEKEFHFSRYITIRRK) is interaction with DNA. The homeobox DNA-binding region spans 185–244 (KDKYRVVYTDHQRLELEKEFHFSRYITIRRKSELAATLGLSERQVKIWFQNRRAKERKIK). The interval 227–241 (RQVKIWFQNRRAKER) is interaction with 5-mCpG DNA. The tract at residues 239–311 (KERKIKKKQQ…GGVLNSTVTQ (73 aa)) is disordered. Residues 248–257 (QQQQQQQQQQ) show a composition bias toward low complexity. Residues 258 to 268 (PPQPPPQPSQP) show a composition bias toward pro residues. Ser-281 bears the Phosphoserine; by CDK2 mark. A 4S motif; modulates transactivation activity and protein stability motif is present at residues 281–293 (SPVTSLQGSVPGS). The span at 285 to 298 (SLQGSVPGSVPGVL) shows a compositional bias: low complexity.

This sequence belongs to the Caudal homeobox family. Can bind DNA as a monomer or homodimer. Post-translationally, ubiquitinated, leading to its degradation by the proteasome. In terms of processing, phosphorylation at Ser-60 reduces transactivation capacity. Phosphorylation at Ser-281 reduces transactivation capacity and increases ubiquitin-dependent proteasome degradation. In the intestine, detected in ileum and proximal and distal colon (at protein level). In adult small intestine, predominantly localized in crypt and lower villus cells of the epithelium (at protein level). Expressed in the intestine but not detected in other tissues including stomach, liver, kidney, spleen, brain, heart, lung, pancreas, skeletal muscle and testis. Expressed specifically in gut epithelium where it is not restricted to a particular cell lineage. Abundant expression is seen in the proximal colon with slightly lower levels in distal colon. Expression in the proximal colon is not restricted either to a particular cell lineage or stage of differentiation while in the distal colon it is more abundant in the differentiated cells towards the top of the crypt.

It localises to the nucleus. Its function is as follows. Transcription factor which regulates the transcription of multiple genes expressed in the intestinal epithelium. Binds to the promoter of the intestinal sucrase-isomaltase SI and activates SI transcription. Binds to the DNA sequence 5'-ATAAAAACTTAT-3' in the promoter region of VDR and activates VDR transcription. Binds to and activates transcription of LPH. Activates transcription of CLDN2 and intestinal mucin MUC2. Binds to the 5'-AATTTTTTACAACACCT-3' DNA sequence in the promoter region of CA1 and activates CA1 transcription. Important in broad range of functions from early differentiation to maintenance of the intestinal epithelial lining of both the small and large intestine. Binds preferentially to methylated DNA. This chain is Homeobox protein CDX-2 (Cdx2), found in Mus musculus (Mouse).